The primary structure comprises 122 residues: Large ribosomal subunit protein uL14 (122 aa).

The protein belongs to the universal ribosomal protein uL14 family. As to quaternary structure, part of the 50S ribosomal subunit. Forms a cluster with proteins L3 and L19. In the 70S ribosome, L14 and L19 interact and together make contacts with the 16S rRNA in bridges B5 and B8.

In terms of biological role, binds to 23S rRNA. Forms part of two intersubunit bridges in the 70S ribosome. In Endomicrobium trichonymphae, this protein is Large ribosomal subunit protein uL14.